A 288-amino-acid chain; its full sequence is MLLLDGKATAAAIRAELKEEVAAGLAAAGRAPGLAVILVGEDPASQVYVRNKERGCEEAGIRSEAFRLPADTTQETLEVLIDELNGRADIDGILLQLPLPKGLNSQRCLERISPRKDVDGFHPENMGRLALGLPGFRPCTPAGVMTLLERYDLSPSGKKAVVVGRSNIVGKPLALMLGAPGKYANATVTVCHSGTPDLAEECRQADFLFVAAGRPCLVTSDMVKPGAVVVDVGIHRTDEGLVGDCKYDDISCIAAAMTPVPGGVGPMTIAQLLINTVISWKGRTGIAG.

NADP(+) contacts are provided by residues 164 to 166 (GRS), Ser-193, and Ile-234.

Belongs to the tetrahydrofolate dehydrogenase/cyclohydrolase family. In terms of assembly, homodimer.

It catalyses the reaction (6R)-5,10-methylene-5,6,7,8-tetrahydrofolate + NADP(+) = (6R)-5,10-methenyltetrahydrofolate + NADPH. The catalysed reaction is (6R)-5,10-methenyltetrahydrofolate + H2O = (6R)-10-formyltetrahydrofolate + H(+). Its pathway is one-carbon metabolism; tetrahydrofolate interconversion. In terms of biological role, catalyzes the oxidation of 5,10-methylenetetrahydrofolate to 5,10-methenyltetrahydrofolate and then the hydrolysis of 5,10-methenyltetrahydrofolate to 10-formyltetrahydrofolate. The chain is Bifunctional protein FolD from Nitratidesulfovibrio vulgaris (strain DSM 19637 / Miyazaki F) (Desulfovibrio vulgaris).